The chain runs to 497 residues: Acetyl-coenzyme A carboxylase carboxyl transferase subunit beta, chloroplastic (497 aa).

The CoA carboxyltransferase N-terminal domain maps to 230-497 (LWVQCENCYG…FFPVNSNSIK (268 aa)). 4 residues coordinate Zn(2+): cysteine 234, cysteine 237, cysteine 253, and cysteine 256. The segment at 234 to 256 (CENCYGLNYKKFFRSKFNICEQC) adopts a C4-type zinc-finger fold.

It belongs to the AccD/PCCB family. In terms of assembly, acetyl-CoA carboxylase is a heterohexamer composed of biotin carboxyl carrier protein, biotin carboxylase and 2 subunits each of ACCase subunit alpha and ACCase plastid-coded subunit beta (accD). Zn(2+) is required as a cofactor.

The protein resides in the plastid. Its subcellular location is the chloroplast stroma. The enzyme catalyses N(6)-carboxybiotinyl-L-lysyl-[protein] + acetyl-CoA = N(6)-biotinyl-L-lysyl-[protein] + malonyl-CoA. Its pathway is lipid metabolism; malonyl-CoA biosynthesis; malonyl-CoA from acetyl-CoA: step 1/1. Component of the acetyl coenzyme A carboxylase (ACC) complex. Biotin carboxylase (BC) catalyzes the carboxylation of biotin on its carrier protein (BCCP) and then the CO(2) group is transferred by the transcarboxylase to acetyl-CoA to form malonyl-CoA. In Nandina domestica (Heavenly bamboo), this protein is Acetyl-coenzyme A carboxylase carboxyl transferase subunit beta, chloroplastic.